Here is a 247-residue protein sequence, read N- to C-terminus: Flagellin B1 (247 aa).

Residues 1–20 (MNKLLRKVRKAFSLKADNKA) constitute a propeptide that is removed on maturation.

The protein belongs to the archaeal flagellin family. Post-translationally, glycosylated.

Its subcellular location is the archaeal flagellum. Its function is as follows. Flagellin is the subunit protein which polymerizes to form the filaments of archaeal flagella. This is Flagellin B1 from Thermoplasma volcanium (strain ATCC 51530 / DSM 4299 / JCM 9571 / NBRC 15438 / GSS1).